The following is a 196-amino-acid chain: DNA polymerase epsilon subunit D (196 aa).

Positions 125–196 are disordered; it reads RKKEKLDSGE…ETRVQNLEQT (72 aa). The segment covering 133–143 has biased composition (acidic residues); sequence GEVDADGDIDM. Residues 144–159 show a composition bias toward basic and acidic residues; that stretch reads GEDKENVPVEKVKEHD. Over residues 160 to 173 the composition is skewed to acidic residues; the sequence is EIEEQGDALQDVEE. The segment covering 174–188 has biased composition (basic and acidic residues); it reads SSEKKQKTESQDVET. Residue Ser-183 is modified to Phosphoserine; by ATM or ATR.

In terms of assembly, DNA polymerase epsilon is a heterotetramer consisting of POL2, DPB2, DPB3 and DPB4. Component of the ISW2 complex, which at least consists of ISW2, ITC1, DLS1 and DPB4.

Its subcellular location is the nucleus. Functionally, as accessory component of the DNA polymerase epsilon (DNA polymerase II) participates in chromosomal DNA replication. It is required during synthesis of the leading and lagging DNA strands at the replication fork and binds at/or near replication origins and moves along DNA with the replication fork. It has 3'-5' proofreading exonuclease activity that correct errors arising during DNA replication. It is also involved in DNA synthesis during DNA repair. Also functions as a component of the ISW2 complex, which acts in remodeling the chromatin by catalyzing an ATP-dependent alteration in the structure of nucleosomal DNA. The ISW2 complex is involved in coordinating transcriptional repression and in inheritance of telomeric silencing. It is involved in repression of MAT a-specific genes, INO1, and early meiotic genes during mitotic growth dependent upon transcription factor UME6 and in a parallel pathway to the RPD3-SIN3 histone deacetylase complex. In Saccharomyces cerevisiae (strain ATCC 204508 / S288c) (Baker's yeast), this protein is DNA polymerase epsilon subunit D (DPB4).